Reading from the N-terminus, the 544-residue chain is Chaperonin GroEL (544 aa).

ATP-binding positions include 30–33 (TLGP), Lys-51, 87–91 (DGTTT), Gly-415, and Asp-495.

This sequence belongs to the chaperonin (HSP60) family. As to quaternary structure, forms a cylinder of 14 subunits composed of two heptameric rings stacked back-to-back. Interacts with the co-chaperonin GroES.

It is found in the cytoplasm. The enzyme catalyses ATP + H2O + a folded polypeptide = ADP + phosphate + an unfolded polypeptide.. In terms of biological role, together with its co-chaperonin GroES, plays an essential role in assisting protein folding. The GroEL-GroES system forms a nano-cage that allows encapsulation of the non-native substrate proteins and provides a physical environment optimized to promote and accelerate protein folding. This is Chaperonin GroEL from Agrobacterium fabrum (strain C58 / ATCC 33970) (Agrobacterium tumefaciens (strain C58)).